The chain runs to 101 residues: Small ribosomal subunit protein uS14 (101 aa).

This sequence belongs to the universal ribosomal protein uS14 family. In terms of assembly, part of the 30S ribosomal subunit. Contacts proteins S3 and S10.

In terms of biological role, binds 16S rRNA, required for the assembly of 30S particles and may also be responsible for determining the conformation of the 16S rRNA at the A site. This Pseudomonas putida (strain W619) protein is Small ribosomal subunit protein uS14.